The primary structure comprises 255 residues: Thiazole synthase (255 aa).

Lys96 acts as the Schiff-base intermediate with DXP in catalysis. Residues Gly157, 183 to 184 (AG), and 205 to 206 (NS) contribute to the 1-deoxy-D-xylulose 5-phosphate site.

The protein belongs to the ThiG family. Homotetramer. Forms heterodimers with either ThiH or ThiS.

The protein localises to the cytoplasm. The catalysed reaction is [ThiS sulfur-carrier protein]-C-terminal-Gly-aminoethanethioate + 2-iminoacetate + 1-deoxy-D-xylulose 5-phosphate = [ThiS sulfur-carrier protein]-C-terminal Gly-Gly + 2-[(2R,5Z)-2-carboxy-4-methylthiazol-5(2H)-ylidene]ethyl phosphate + 2 H2O + H(+). The protein operates within cofactor biosynthesis; thiamine diphosphate biosynthesis. Functionally, catalyzes the rearrangement of 1-deoxy-D-xylulose 5-phosphate (DXP) to produce the thiazole phosphate moiety of thiamine. Sulfur is provided by the thiocarboxylate moiety of the carrier protein ThiS. In vitro, sulfur can be provided by H(2)S. This is Thiazole synthase from Exiguobacterium sibiricum (strain DSM 17290 / CCUG 55495 / CIP 109462 / JCM 13490 / 255-15).